A 401-amino-acid chain; its full sequence is Protein KlcB (401 aa).

A disordered region spans residues 253 to 311 (AARSNAKGKAGGRERDPASAETAMRCSTAKADDCKAEAGPVSPEATMPGAGEASCSTAR).

The sequence is that of Protein KlcB (klcB) from Escherichia coli.